The sequence spans 360 residues: Phospho-N-acetylmuramoyl-pentapeptide-transferase (360 aa).

The next 10 helical transmembrane spans lie at 18–38 (VFSY…FLSL), 72–92 (PTMG…MWAY), 94–114 (SNPY…VGFV), 132–152 (WKYF…YAVG), 168–188 (IMPQ…VGTS), 199–219 (GLAI…AWAT), 236–256 (AGEL…FLWF), 263–283 (VFMG…IAVL), 288–308 (FLLL…ILQV), and 338–358 (VIVR…ATLK).

It belongs to the glycosyltransferase 4 family. MraY subfamily. It depends on Mg(2+) as a cofactor.

The protein localises to the cell inner membrane. The enzyme catalyses UDP-N-acetyl-alpha-D-muramoyl-L-alanyl-gamma-D-glutamyl-meso-2,6-diaminopimeloyl-D-alanyl-D-alanine + di-trans,octa-cis-undecaprenyl phosphate = di-trans,octa-cis-undecaprenyl diphospho-N-acetyl-alpha-D-muramoyl-L-alanyl-D-glutamyl-meso-2,6-diaminopimeloyl-D-alanyl-D-alanine + UMP. Its pathway is cell wall biogenesis; peptidoglycan biosynthesis. Catalyzes the initial step of the lipid cycle reactions in the biosynthesis of the cell wall peptidoglycan: transfers peptidoglycan precursor phospho-MurNAc-pentapeptide from UDP-MurNAc-pentapeptide onto the lipid carrier undecaprenyl phosphate, yielding undecaprenyl-pyrophosphoryl-MurNAc-pentapeptide, known as lipid I. This Serratia proteamaculans (strain 568) protein is Phospho-N-acetylmuramoyl-pentapeptide-transferase.